We begin with the raw amino-acid sequence, 108 residues long: UPF0145 protein AF_0869 (108 aa).

This sequence belongs to the UPF0145 family.

The polypeptide is UPF0145 protein AF_0869 (Archaeoglobus fulgidus (strain ATCC 49558 / DSM 4304 / JCM 9628 / NBRC 100126 / VC-16)).